A 79-amino-acid chain; its full sequence is MNKFLNLIGLAFVLVLCAFSCSNAEEMGSCSSWHVAQKGYTCYDMATSCKVTLDQFMRTNKLDNNACKLVQIGRKYCCN.

A signal peptide spans Met-1–Ala-24. In terms of domain architecture, LysM spans Ser-32–Cys-78.

The protein localises to the secreted. This is an uncharacterized protein from Dictyostelium discoideum (Social amoeba).